The primary structure comprises 152 residues: Small ribosomal subunit protein bS6 (152 aa).

The disordered stretch occupies residues 96 to 152; the sequence is HEEGPSAMLQKRDRDDRGPREGGDRGPRREFGDRPPRRDGDFQRGPRPDRAPREDRA.

It belongs to the bacterial ribosomal protein bS6 family.

Its function is as follows. Binds together with bS18 to 16S ribosomal RNA. In Rhizobium etli (strain ATCC 51251 / DSM 11541 / JCM 21823 / NBRC 15573 / CFN 42), this protein is Small ribosomal subunit protein bS6.